The following is a 246-amino-acid chain: Exosome complex component Rrp41 (246 aa).

This sequence belongs to the RNase PH family. Rrp41 subfamily. As to quaternary structure, component of the archaeal exosome complex. Forms a hexameric ring-like arrangement composed of 3 Rrp41-Rrp42 heterodimers. The hexameric ring associates with a trimer of Rrp4 and/or Csl4 subunits.

It localises to the cytoplasm. In terms of biological role, catalytic component of the exosome, which is a complex involved in RNA degradation. Has 3'-&gt;5' exoribonuclease activity. Can also synthesize heteromeric RNA-tails. The sequence is that of Exosome complex component Rrp41 from Pyrobaculum arsenaticum (strain DSM 13514 / JCM 11321 / PZ6).